A 259-amino-acid polypeptide reads, in one-letter code: GTP cyclohydrolase FolE2 (259 aa).

This sequence belongs to the GTP cyclohydrolase IV family.

The enzyme catalyses GTP + H2O = 7,8-dihydroneopterin 3'-triphosphate + formate + H(+). Its pathway is cofactor biosynthesis; 7,8-dihydroneopterin triphosphate biosynthesis; 7,8-dihydroneopterin triphosphate from GTP: step 1/1. Its function is as follows. Converts GTP to 7,8-dihydroneopterin triphosphate. This Thermosipho africanus (strain TCF52B) protein is GTP cyclohydrolase FolE2.